The following is a 157-amino-acid chain: NADPH-dependent 7-cyano-7-deazaguanine reductase (157 aa).

The active-site Thioimide intermediate is Cys-55. Catalysis depends on Asp-62, which acts as the Proton donor. Residues 77-79 and 96-97 each bind substrate; these read VES and HE.

Belongs to the GTP cyclohydrolase I family. QueF type 1 subfamily.

The protein localises to the cytoplasm. The catalysed reaction is 7-aminomethyl-7-carbaguanine + 2 NADP(+) = 7-cyano-7-deazaguanine + 2 NADPH + 3 H(+). The protein operates within tRNA modification; tRNA-queuosine biosynthesis. Its function is as follows. Catalyzes the NADPH-dependent reduction of 7-cyano-7-deazaguanine (preQ0) to 7-aminomethyl-7-deazaguanine (preQ1). The sequence is that of NADPH-dependent 7-cyano-7-deazaguanine reductase from Neisseria gonorrhoeae (strain ATCC 700825 / FA 1090).